Here is a 414-residue protein sequence, read N- to C-terminus: TAR DNA-binding protein 43 (414 aa).

Residues Lys79, Lys84, Lys95, Lys102, and Lys181 each participate in a glycyl lysine isopeptide (Lys-Gly) (interchain with G-Cter in SUMO2) cross-link. RRM domains follow at residues 104–200 (SDLI…RCTE) and 191–262 (RKVF…NAEP). A Phosphoserine modification is found at Ser183. Residues 216–414 (EVVDVFIPKP…MDSKSSGWGM (199 aa)) are interaction with UBQLN2. Basic and acidic residues predominate over residues 261–274 (EPKHNSNRQLERSG). Disordered regions lie at residues 261–301 (EPKH…GLGN) and 341–414 (ASQQ…GWGM). Lys263 participates in a covalent cross-link: Glycyl lysine isopeptide (Lys-Gly) (interchain with G-Cter in SUMO2). Residues 275 to 301 (RFGGNPGGFGNQGGFGNSRGGGAGLGN) show a composition bias toward gly residues. Phosphoserine is present on Ser292. Arg293 carries the omega-N-methylarginine modification. 2 stretches are compositionally biased toward low complexity: residues 342–358 (SQQN…SQGS) and 368–392 (GSGN…SNAG). Gly residues predominate over residues 393–402 (SGSGFNGGFG). Polar residues predominate over residues 405-414 (MDSKSSGWGM).

As to quaternary structure, homodimer. Homooligomer (via its N-terminal domain). Interacts with BRDT. Binds specifically to pyrimidine-rich motifs of TAR DNA and to single stranded TG repeated sequences. Binds to RNA, specifically to UG repeated sequences with a minimum of six contiguous repeats. Interacts with ATXN2; the interaction is RNA-dependent. Interacts with MATR3. Interacts with UBQLN2. Interacts with HNRNPA2B1. Interacts with ZNF106. Interacts with CNOT7/CAF1. Interacts with CRY2. Interacts with PPIA/CYPA; the interaction is dependent on RNA-binding activity of TARDBP and PPIase activity of PPIA/CYPA. Acetylation of PPIA/CYPA at 'Lys-125' favors the interaction of TARDBP with PPIA/CYPA. In terms of processing, hyperphosphorylated. Ubiquitinated.

Its subcellular location is the nucleus. It localises to the cytoplasm. The protein resides in the stress granule. The protein localises to the mitochondrion. Functionally, RNA-binding protein that is involved in various steps of RNA biogenesis and processing. Preferentially binds, via its two RNA recognition motifs RRM1 and RRM2, to GU-repeats on RNA molecules predominantly localized within long introns and in the 3'UTR of mRNAs. In turn, regulates the splicing of many non-coding and protein-coding RNAs including proteins involved in neuronal survival, as well as mRNAs that encode proteins relevant for neurodegenerative diseases. Plays a role in maintaining mitochondrial homeostasis by regulating the processing of mitochondrial transcripts. Also regulates mRNA stability by recruiting CNOT7/CAF1 deadenylase on mRNA 3'UTR leading to poly(A) tail deadenylation and thus shortening. In response to oxidative insult, associates with stalled ribosomes localized to stress granules (SGs) and contributes to cell survival. Also participates in the normal skeletal muscle formation and regeneration, forming cytoplasmic myo-granules and binding mRNAs that encode sarcomeric proteins. Plays a role in the maintenance of the circadian clock periodicity via stabilization of the CRY1 and CRY2 proteins in a FBXL3-dependent manner. Negatively regulates the expression of CDK6. Regulates the expression of HDAC6, ATG7 and VCP in a PPIA/CYPA-dependent manner. The sequence is that of TAR DNA-binding protein 43 (Tardbp) from Mus musculus (Mouse).